The sequence spans 226 residues: PKHD-type hydroxylase Bpet2704 (226 aa).

The 101-residue stretch at 78–178 (KIFPPLFNRY…RISAFFWMQS (101 aa)) folds into the Fe2OG dioxygenase domain. Fe cation is bound by residues His-96, Asp-98, and His-159. Arg-169 serves as a coordination point for 2-oxoglutarate.

Requires Fe(2+) as cofactor. It depends on L-ascorbate as a cofactor.

The sequence is that of PKHD-type hydroxylase Bpet2704 from Bordetella petrii (strain ATCC BAA-461 / DSM 12804 / CCUG 43448).